The primary structure comprises 334 residues: Protein-methionine-sulfoxide reductase catalytic subunit MsrP (334 aa).

Positions 1 to 44 (MKKKQFLKESDVTAESVFFMKRRQVLKALGISAAALSLPHAAHA) form a signal peptide, tat-type signal. Residues Asn-88, 91-92 (YE), Cys-146, Thr-181, Asn-233, Arg-238, and 249-251 (GIK) each bind Mo-molybdopterin.

This sequence belongs to the MsrP family. In terms of assembly, heterodimer of a catalytic subunit (MsrP) and a heme-binding subunit (MsrQ). Mo-molybdopterin is required as a cofactor. In terms of processing, predicted to be exported by the Tat system. The position of the signal peptide cleavage has not been experimentally proven.

The protein localises to the periplasm. The catalysed reaction is L-methionyl-[protein] + a quinone + H2O = L-methionyl-(S)-S-oxide-[protein] + a quinol. The enzyme catalyses L-methionyl-[protein] + a quinone + H2O = L-methionyl-(R)-S-oxide-[protein] + a quinol. Part of the MsrPQ system that repairs oxidized periplasmic proteins containing methionine sulfoxide residues (Met-O), using respiratory chain electrons. Thus protects these proteins from oxidative-stress damage caused by reactive species of oxygen and chlorine generated by the host defense mechanisms. MsrPQ is essential for the maintenance of envelope integrity under bleach stress, rescuing a wide series of structurally unrelated periplasmic proteins from methionine oxidation, including the primary periplasmic chaperone SurA and the lipoprotein Pal. The catalytic subunit MsrP is non-stereospecific, being able to reduce both (R-) and (S-) diastereoisomers of methionine sulfoxide. The chain is Protein-methionine-sulfoxide reductase catalytic subunit MsrP from Escherichia coli O139:H28 (strain E24377A / ETEC).